The primary structure comprises 201 residues: IMP cyclohydrolase (201 aa).

The protein belongs to the archaeal IMP cyclohydrolase family.

The catalysed reaction is IMP + H2O = 5-formamido-1-(5-phospho-D-ribosyl)imidazole-4-carboxamide. It participates in purine metabolism; IMP biosynthesis via de novo pathway; IMP from 5-formamido-1-(5-phospho-D-ribosyl)imidazole-4-carboxamide: step 1/1. Its function is as follows. Catalyzes the cyclization of 5-formylamidoimidazole-4-carboxamide ribonucleotide to IMP. The chain is IMP cyclohydrolase from Methanococcus maripaludis (strain C5 / ATCC BAA-1333).